We begin with the raw amino-acid sequence, 49 residues long: GQFLEDPSVLTKEKLKSELVANNVTLPAGEQRKDVYVELYLQHLTALKR.

One can recognise an LEM-like domain in the interval 4-47; sequence LEDPSVLTKEKLKSELVANNVTLPAGEQRKDVYVELYLQHLTAL. The interval 32–36 is biological activity; sequence RKDVY.

This sequence belongs to the thymopoietin family.

Its function is as follows. Hormone of the thymus with pleiotropic actions on prothymocytes, mature T-cells, the nicotinic acetylcholine receptor, and pituitary corticotrophs. This chain is Thymopoietin-1, found in Bos taurus (Bovine).